The primary structure comprises 162 residues: uncharacterized protein (162 aa).

Transmembrane regions (helical) follow at residues 10–30 (ILSFTYLALVLCLVMPFMLIL), 50–70 (IVELIVLSIFAGFITSFALYN), 96–116 (IAQYEVMVSIFYSLLLLIILL), and 125–145 (FTAIFQIFFTFCAIFVPLFIF).

The protein localises to the cell membrane. This is an uncharacterized protein from Methanocaldococcus jannaschii (strain ATCC 43067 / DSM 2661 / JAL-1 / JCM 10045 / NBRC 100440) (Methanococcus jannaschii).